The primary structure comprises 186 residues: Peptidyl-tRNA hydrolase (186 aa).

Tyr14 serves as a coordination point for tRNA. His19 (proton acceptor) is an active-site residue. Tyr61, Asn63, and Asn107 together coordinate tRNA.

This sequence belongs to the PTH family. Monomer.

Its subcellular location is the cytoplasm. It carries out the reaction an N-acyl-L-alpha-aminoacyl-tRNA + H2O = an N-acyl-L-amino acid + a tRNA + H(+). Its function is as follows. Hydrolyzes ribosome-free peptidyl-tRNAs (with 1 or more amino acids incorporated), which drop off the ribosome during protein synthesis, or as a result of ribosome stalling. In terms of biological role, catalyzes the release of premature peptidyl moieties from peptidyl-tRNA molecules trapped in stalled 50S ribosomal subunits, and thus maintains levels of free tRNAs and 50S ribosomes. In Helicobacter pylori (strain G27), this protein is Peptidyl-tRNA hydrolase.